We begin with the raw amino-acid sequence, 282 residues long: Bifunctional protein FolD (282 aa).

NADP(+) contacts are provided by residues 164–166 (GRS) and Ser-189.

This sequence belongs to the tetrahydrofolate dehydrogenase/cyclohydrolase family. In terms of assembly, homodimer.

The enzyme catalyses (6R)-5,10-methylene-5,6,7,8-tetrahydrofolate + NADP(+) = (6R)-5,10-methenyltetrahydrofolate + NADPH. The catalysed reaction is (6R)-5,10-methenyltetrahydrofolate + H2O = (6R)-10-formyltetrahydrofolate + H(+). It functions in the pathway one-carbon metabolism; tetrahydrofolate interconversion. In terms of biological role, catalyzes the oxidation of 5,10-methylenetetrahydrofolate to 5,10-methenyltetrahydrofolate and then the hydrolysis of 5,10-methenyltetrahydrofolate to 10-formyltetrahydrofolate. The protein is Bifunctional protein FolD of Streptococcus suis (strain 98HAH33).